The primary structure comprises 197 residues: Small ribosomal subunit protein uS5 (197 aa).

Residues 1 to 17 are compositionally biased toward basic and acidic residues; it reads MAERENRGRGRGRNREE. Disordered stretches follow at residues 1–22 and 158–197; these read MAERENRGRGRGRNREEETPEF and NESSPRQVASRRGKKVADILPKRDDHPQIDGEQAPVSEEA. Residues 22 to 85 form the S5 DRBM domain; it reads FADRLVAINR…EQAKRQLIRV (64 aa). Residues 172 to 186 show a composition bias toward basic and acidic residues; sequence KVADILPKRDDHPQI.

Belongs to the universal ribosomal protein uS5 family. In terms of assembly, part of the 30S ribosomal subunit. Contacts proteins S4 and S8.

Its function is as follows. With S4 and S12 plays an important role in translational accuracy. Located at the back of the 30S subunit body where it stabilizes the conformation of the head with respect to the body. In Jannaschia sp. (strain CCS1), this protein is Small ribosomal subunit protein uS5.